Here is a 58-residue protein sequence, read N- to C-terminus: Large ribosomal subunit protein uL30 (58 aa).

The protein belongs to the universal ribosomal protein uL30 family. Part of the 50S ribosomal subunit.

This chain is Large ribosomal subunit protein uL30, found in Blochmanniella floridana.